The chain runs to 327 residues: 4-hydroxyproline 2-epimerase (327 aa).

The active-site Proton acceptor is the Cys-85. Residues 86–87 (GH), His-205, and Asp-231 contribute to the substrate site. Cys-235 functions as the Proton donor in the catalytic mechanism. 236 to 237 (GT) is a binding site for substrate.

This sequence belongs to the proline racemase family.

It carries out the reaction trans-4-hydroxy-L-proline = cis-4-hydroxy-D-proline. In terms of biological role, catalyzes the epimerization of trans-4-hydroxy-L-proline (t4LHyp) to cis-4-hydroxy-D-proline (c4DHyp). Displays no proline racemase activity. This chain is 4-hydroxyproline 2-epimerase, found in Roseibium alexandrii (strain DSM 17067 / NCIMB 14079 / DFL-11) (Labrenzia alexandrii).